Here is a 655-residue protein sequence, read N- to C-terminus: p-hydroxybenzoic acid efflux pump subunit AaeB (655 aa).

Over 1 to 12 (MDIFSIANQHIR) the chain is Periplasmic. Residues 13-33 (FAVKLATAIVLALFVGFHFQL) traverse the membrane as a helical segment. Residues 34–37 (ETPR) are Cytoplasmic-facing. A helical transmembrane segment spans residues 38 to 58 (WAVLTAAIVAAGPAFAAGGEP). Residues 59-68 (YSGAIRYRGF) lie on the Periplasmic side of the membrane. The helical transmembrane segment at 69 to 89 (LRIIGTFIGCIAGLVIIIAMI) threads the bilayer. Over 90 to 92 (RAP) the chain is Cytoplasmic. A helical transmembrane segment spans residues 93-113 (LLMILVCCIWAGFCTWISSLV). Residues 114 to 120 (RIENSYA) lie on the Periplasmic side of the membrane. Residues 121–141 (WGLAGYTALIIVITIQPEPLL) traverse the membrane as a helical segment. Topologically, residues 142 to 151 (TPQFAVERCS) are cytoplasmic. The helical transmembrane segment at 152–172 (EIVIGIVCAIMADLLFSPRSI) threads the bilayer. Residues 173–369 (KQEVDRELES…RTTLSCILGT (197 aa)) are Periplasmic-facing. A helical transmembrane segment spans residues 370 to 390 (LFWLWTGWTSGSGAMVMIAVV). Residues 391–406 (TSLAMRLPNPRMVAID) lie on the Cytoplasmic side of the membrane. The chain crosses the membrane as a helical span at residues 407 to 427 (FIYGTLAALPLGLLYFLVIIP). Topologically, residues 428 to 430 (NTQ) are periplasmic. Residues 431–451 (QSMLLLCISLAVLGFFLGIEV) traverse the membrane as a helical segment. Over 452 to 458 (QKRRLGS) the chain is Cytoplasmic. The chain crosses the membrane as a helical span at residues 459 to 479 (MGALASTINIIVLDNPMTFHF). The Periplasmic portion of the chain corresponds to 480 to 481 (SQ). Residues 482–502 (FLDSALGQIVGCVLAFTVILL) form a helical membrane-spanning segment. Over 503–655 (VRDKSRDRTG…HKYQHALTDS (153 aa)) the chain is Cytoplasmic.

Belongs to the aromatic acid exporter ArAE (TC 2.A.85) family.

It is found in the cell inner membrane. Forms an efflux pump with AaeA. Could function as a metabolic relief valve, allowing to eliminate certain compounds when they accumulate to high levels in the cell. In Escherichia coli O157:H7, this protein is p-hydroxybenzoic acid efflux pump subunit AaeB.